The following is a 405-amino-acid chain: Protein PAG1 (405 aa).

The signal sequence occupies residues 1 to 50; it reads MVSLIILFRLTFAIANRVRTLMKVLVIVSFFVLTGSASADSGALSLSGAA. N-linked (GlcNAc...) asparagine glycosylation is found at asparagine 55, asparagine 104, asparagine 256, and asparagine 351. Alanine 391 carries the GPI-anchor amidated alanine lipid modification. Positions 392–405 are cleaved as a propeptide — removed in mature form; it reads DSLRRTLALLFLLF.

It is found in the cell membrane. The sequence is that of Protein PAG1 (PAG1) from Trypanosoma brucei brucei.